Reading from the N-terminus, the 269-residue chain is Small ribosomal subunit protein eS1 (269 aa).

Positions 1–20 (MAVGKNKGVSKGGKKGSKKK) are disordered.

The protein belongs to the eukaryotic ribosomal protein eS1 family. As to quaternary structure, component of the small ribosomal subunit. Mature ribosomes consist of a small (40S) and a large (60S) subunit. The 40S subunit contains about 33 different proteins and 1 molecule of RNA (18S). The 60S subunit contains about 49 different proteins and 3 molecules of RNA (28S, 5.8S and 5S).

The protein resides in the cytoplasm. Functionally, has an essential role in oogenesis. This is Small ribosomal subunit protein eS1 from Anopheles gambiae (African malaria mosquito).